We begin with the raw amino-acid sequence, 562 residues long: Probable malate:quinone oxidoreductase (562 aa).

Belongs to the MQO family. FAD is required as a cofactor.

It carries out the reaction (S)-malate + a quinone = a quinol + oxaloacetate. The protein operates within carbohydrate metabolism; tricarboxylic acid cycle; oxaloacetate from (S)-malate (quinone route): step 1/1. The sequence is that of Probable malate:quinone oxidoreductase from Stenotrophomonas maltophilia (strain K279a).